Reading from the N-terminus, the 151-residue chain is D-aminoacyl-tRNA deacylase (151 aa).

A Gly-cisPro motif, important for rejection of L-amino acids motif is present at residues 136 to 137; it reads GP.

Belongs to the DTD family. Homodimer.

The protein localises to the cytoplasm. It carries out the reaction glycyl-tRNA(Ala) + H2O = tRNA(Ala) + glycine + H(+). It catalyses the reaction a D-aminoacyl-tRNA + H2O = a tRNA + a D-alpha-amino acid + H(+). An aminoacyl-tRNA editing enzyme that deacylates mischarged D-aminoacyl-tRNAs. Also deacylates mischarged glycyl-tRNA(Ala), protecting cells against glycine mischarging by AlaRS. Acts via tRNA-based rather than protein-based catalysis; rejects L-amino acids rather than detecting D-amino acids in the active site. By recycling D-aminoacyl-tRNA to D-amino acids and free tRNA molecules, this enzyme counteracts the toxicity associated with the formation of D-aminoacyl-tRNA entities in vivo and helps enforce protein L-homochirality. The polypeptide is D-aminoacyl-tRNA deacylase (Lactococcus lactis subsp. lactis (strain IL1403) (Streptococcus lactis)).